The primary structure comprises 285 residues: Heterogeneous nuclear ribonucleoprotein A/B (285 aa).

The disordered stretch occupies residues 1–65; it reads MSDAAEEQPM…NQNGAEGDQI (65 aa). Residues 25–43 are compositionally biased toward low complexity; that stretch reads EGEAPVEPSAAAAAPAASA. RRM domains are found at residues 75–158 and 159–238; these read GKMF…KDPV and KKIF…QPKE. At S87 the chain carries Phosphoserine. Glycyl lysine isopeptide (Lys-Gly) (interchain with G-Cter in SUMO2) cross-links involve residues K136 and K208. Position 220 is an N6-acetyllysine (K220). The tract at residues 239–285 is disordered; sequence VYQQQQYGSGGRGNRNRGNRGSGGGQGSTNYGKSQRRGGHQNNYKPY. S247 carries the phosphoserine modification. R250 is modified (dimethylated arginine; alternate). Position 250 is an omega-N-methylarginine; alternate (R250). Residues R255 and R258 each carry the omega-N-methylarginine modification. An N6-acetyllysine modification is found at K271. R275 carries the post-translational modification Dimethylated arginine; alternate. R275 carries the post-translational modification Omega-N-methylarginine; alternate. R275 bears the Asymmetric dimethylarginine; alternate mark.

As to quaternary structure, identified in a IGF2BP1-dependent mRNP granule complex containing untranslated mRNAs. Interacts with APOBEC1. Ubiquitous.

The protein resides in the nucleus. It localises to the cytoplasm. In terms of biological role, transcriptional repressor. Binds to CArG box motifs, single-stranded and double-stranded DNA, and RNA. It may be that repression by CBF-A is a result of competitive binding of CBF, a putative positive factor, and CBF-A to the same or overlapping motifs around the CArG boxes. This chain is Heterogeneous nuclear ribonucleoprotein A/B (Hnrnpab), found in Mus musculus (Mouse).